The primary structure comprises 341 residues: Holliday junction branch migration complex subunit RuvB (341 aa).

The interval 1-22 is disordered; it reads MSETAGKGVTMPEIMQSSYPDE. Positions 4 to 193 are large ATPase domain (RuvB-L); it reads TAGKGVTMPE…FGIISRLEFY (190 aa). Residues Ile-32, Arg-33, Gly-74, Lys-77, Thr-78, Thr-79, 140–142, Arg-183, Tyr-193, and Arg-230 each bind ATP; that span reads EDY. Thr-78 lines the Mg(2+) pocket. The interval 194-264 is small ATPAse domain (RuvB-S); sequence TPEELSQIIL…LVNHALQKLD (71 aa). Positions 267–341 are head domain (RuvB-H); sequence EKGLDQMDRK…KAYKHLNLTD (75 aa). DNA is bound by residues Arg-322 and Arg-327.

It belongs to the RuvB family. As to quaternary structure, homohexamer. Forms an RuvA(8)-RuvB(12)-Holliday junction (HJ) complex. HJ DNA is sandwiched between 2 RuvA tetramers; dsDNA enters through RuvA and exits via RuvB. An RuvB hexamer assembles on each DNA strand where it exits the tetramer. Each RuvB hexamer is contacted by two RuvA subunits (via domain III) on 2 adjacent RuvB subunits; this complex drives branch migration. In the full resolvosome a probable DNA-RuvA(4)-RuvB(12)-RuvC(2) complex forms which resolves the HJ.

Its subcellular location is the cytoplasm. The catalysed reaction is ATP + H2O = ADP + phosphate + H(+). Functionally, the RuvA-RuvB-RuvC complex processes Holliday junction (HJ) DNA during genetic recombination and DNA repair, while the RuvA-RuvB complex plays an important role in the rescue of blocked DNA replication forks via replication fork reversal (RFR). RuvA specifically binds to HJ cruciform DNA, conferring on it an open structure. The RuvB hexamer acts as an ATP-dependent pump, pulling dsDNA into and through the RuvAB complex. RuvB forms 2 homohexamers on either side of HJ DNA bound by 1 or 2 RuvA tetramers; 4 subunits per hexamer contact DNA at a time. Coordinated motions by a converter formed by DNA-disengaged RuvB subunits stimulates ATP hydrolysis and nucleotide exchange. Immobilization of the converter enables RuvB to convert the ATP-contained energy into a lever motion, pulling 2 nucleotides of DNA out of the RuvA tetramer per ATP hydrolyzed, thus driving DNA branch migration. The RuvB motors rotate together with the DNA substrate, which together with the progressing nucleotide cycle form the mechanistic basis for DNA recombination by continuous HJ branch migration. Branch migration allows RuvC to scan DNA until it finds its consensus sequence, where it cleaves and resolves cruciform DNA. The chain is Holliday junction branch migration complex subunit RuvB from Lawsonia intracellularis (strain PHE/MN1-00).